The chain runs to 159 residues: ATP synthase subunit b 2 (159 aa).

A helical membrane pass occupies residues 1 to 21 (MDATFWAFIALVIFVVIVVYM).

Belongs to the ATPase B chain family. As to quaternary structure, F-type ATPases have 2 components, F(1) - the catalytic core - and F(0) - the membrane proton channel. F(1) has five subunits: alpha(3), beta(3), gamma(1), delta(1), epsilon(1). F(0) has three main subunits: a(1), b(2) and c(10-14). The alpha and beta chains form an alternating ring which encloses part of the gamma chain. F(1) is attached to F(0) by a central stalk formed by the gamma and epsilon chains, while a peripheral stalk is formed by the delta and b chains.

It is found in the cell inner membrane. Its function is as follows. F(1)F(0) ATP synthase produces ATP from ADP in the presence of a proton or sodium gradient. F-type ATPases consist of two structural domains, F(1) containing the extramembraneous catalytic core and F(0) containing the membrane proton channel, linked together by a central stalk and a peripheral stalk. During catalysis, ATP synthesis in the catalytic domain of F(1) is coupled via a rotary mechanism of the central stalk subunits to proton translocation. In terms of biological role, component of the F(0) channel, it forms part of the peripheral stalk, linking F(1) to F(0). The sequence is that of ATP synthase subunit b 2 from Brucella canis (strain ATCC 23365 / NCTC 10854 / RM-666).